We begin with the raw amino-acid sequence, 97 residues long: Thiosulfate sulfurtransferase/rhodanese-like domain-containing protein 3 (97 aa).

One can recognise a Rhodanese domain in the interval 32–84 (YKELKNLLNSKNIMLIDVREIWEILEYQKIPESINVPLDEVGEALQMNPRDFK). N6-succinyllysine is present on lysine 84.

In Homo sapiens (Human), this protein is Thiosulfate sulfurtransferase/rhodanese-like domain-containing protein 3 (TSTD3).